Reading from the N-terminus, the 201-residue chain is Holliday junction branch migration complex subunit RuvA (201 aa).

The tract at residues 1-63 is domain I; the sequence is MIAYIKGTLN…EDAQILFGFQ (63 aa). The domain II stretch occupies residues 64 to 142; that stretch reads NRDEKYLFTK…SVFSITDEQQ (79 aa). A flexible linker region spans residues 143–149; sequence KSSVSNV. Positions 150–201 are domain III; it reads NNNEVYSEAMEALKALGYTDKEVKQVLPHLKKDNDALSVDEAIRKALALLAK.

This sequence belongs to the RuvA family. Homotetramer. Forms an RuvA(8)-RuvB(12)-Holliday junction (HJ) complex. HJ DNA is sandwiched between 2 RuvA tetramers; dsDNA enters through RuvA and exits via RuvB. An RuvB hexamer assembles on each DNA strand where it exits the tetramer. Each RuvB hexamer is contacted by two RuvA subunits (via domain III) on 2 adjacent RuvB subunits; this complex drives branch migration. In the full resolvosome a probable DNA-RuvA(4)-RuvB(12)-RuvC(2) complex forms which resolves the HJ.

It is found in the cytoplasm. In terms of biological role, the RuvA-RuvB-RuvC complex processes Holliday junction (HJ) DNA during genetic recombination and DNA repair, while the RuvA-RuvB complex plays an important role in the rescue of blocked DNA replication forks via replication fork reversal (RFR). RuvA specifically binds to HJ cruciform DNA, conferring on it an open structure. The RuvB hexamer acts as an ATP-dependent pump, pulling dsDNA into and through the RuvAB complex. HJ branch migration allows RuvC to scan DNA until it finds its consensus sequence, where it cleaves and resolves the cruciform DNA. This Oceanobacillus iheyensis (strain DSM 14371 / CIP 107618 / JCM 11309 / KCTC 3954 / HTE831) protein is Holliday junction branch migration complex subunit RuvA.